Here is a 342-residue protein sequence, read N- to C-terminus: Glutamyl endopeptidase (342 aa).

A signal peptide spans 1-29; the sequence is MKGKFLKVSSLFVATLTTATLVSSPAANA. The propeptide occupies 30–68; sequence LSSKAMDNHPQQTQSSKQQTPKIKKGGNLKPLEQREHAN. The segment at 33-63 is disordered; that stretch reads KAMDNHPQQTQSSKQQTPKIKKGGNLKPLEQ. The segment covering 39–50 has biased composition (low complexity); sequence PQQTQSSKQQTP. Catalysis depends on charge relay system residues His119, Asp161, and Ser237. The segment at 283–342 is disordered; that stretch reads FANDDQPNNPDNPDNPNNPDNPNNPDNPNNPDEPNNPDNPNNPDNPDNGDNNNSDNPDAA. The span at 286-342 shows a compositional bias: low complexity; sequence DDQPNNPDNPDNPNNPDNPNNPDNPNNPDEPNNPDNPNNPDNPDNGDNNNSDNPDAA. 13 repeat units span residues 289–291, 292–294, 295–297, 298–300, 301–303, 304–306, 307–309, 310–312, 316–318, 319–321, 322–324, 325–327, and 328–330. The 13 X 3 AA repeats of P-[DN]-N stretch occupies residues 289 to 330; it reads PNNPDNPDNPNNPDNPNNPDNPNNPDEPNNPDNPNNPDNPDN.

Belongs to the peptidase S1B family. Proteolytically cleaved by aureolysin (aur). This cleavage leads to the activation of SspA.

It is found in the secreted. The enzyme catalyses Preferential cleavage: Glu-|-Xaa, Asp-|-Xaa.. In terms of biological role, preferentially cleaves peptide bonds on the carboxyl-terminal side of aspartate and glutamate. Along with other extracellular proteases it is involved in colonization and infection of human tissues. Required for proteolytic maturation of thiol protease SspB and inactivation of SspC, an inhibitor of SspB. It is the most important protease for degradation of fibronectin-binding protein (FnBP) and surface protein A, which are involved in adherence to host cells. May also protect bacteria against host defense mechanism by cleaving the immunoglobulin classes IgG, IgA and IgM. May be involved in the stability of secreted lipases. The chain is Glutamyl endopeptidase (sspA) from Staphylococcus aureus (strain Mu50 / ATCC 700699).